We begin with the raw amino-acid sequence, 88 residues long: Small ribosomal subunit protein uS15 (88 aa).

This sequence belongs to the universal ribosomal protein uS15 family. Part of the 30S ribosomal subunit. Forms a bridge to the 50S subunit in the 70S ribosome, contacting the 23S rRNA.

Functionally, one of the primary rRNA binding proteins, it binds directly to 16S rRNA where it helps nucleate assembly of the platform of the 30S subunit by binding and bridging several RNA helices of the 16S rRNA. Forms an intersubunit bridge (bridge B4) with the 23S rRNA of the 50S subunit in the ribosome. The chain is Small ribosomal subunit protein uS15 from Borrelia turicatae (strain 91E135).